We begin with the raw amino-acid sequence, 355 residues long: NADH-quinone oxidoreductase subunit H (355 aa).

8 consecutive transmembrane segments (helical) span residues 25–45 (IVRI…LILW), 91–111 (WLYL…WAVI), 126–146 (LLYA…AGWA), 170–190 (MGFA…SEIV), 205–225 (FLSW…ISGI), 252–272 (GMAF…ISAL), 290–310 (FIPG…VFIW), and 330–350 (VFLP…MSPL).

It belongs to the complex I subunit 1 family. NDH-1 is composed of 14 different subunits. Subunits NuoA, H, J, K, L, M, N constitute the membrane sector of the complex.

It is found in the cell inner membrane. The enzyme catalyses a quinone + NADH + 5 H(+)(in) = a quinol + NAD(+) + 4 H(+)(out). Its function is as follows. NDH-1 shuttles electrons from NADH, via FMN and iron-sulfur (Fe-S) centers, to quinones in the respiratory chain. The immediate electron acceptor for the enzyme in this species is believed to be ubiquinone. Couples the redox reaction to proton translocation (for every two electrons transferred, four hydrogen ions are translocated across the cytoplasmic membrane), and thus conserves the redox energy in a proton gradient. This subunit may bind ubiquinone. The chain is NADH-quinone oxidoreductase subunit H from Burkholderia lata (strain ATCC 17760 / DSM 23089 / LMG 22485 / NCIMB 9086 / R18194 / 383).